Consider the following 1058-residue polypeptide: MPKRTDIQKIMVIGSGPIIIGQAAEFDYAGTQACLSLKEEGYEVVLVNSNPATIMTDKEIADKVYIEPITLEFVTRILRKEGPDALLPTLGGQTGLNMAMELSKNGILDELGVELLGTKLSAIDQAEDRDLFKQLMEELEQPIPESEIVNTVEEAVAFAATIGYPVIVRPAFTLGGTGGGMCANEKELREITENGLKLSPVTQCLIERSIAGFKEIEYEVMRDSADNALVVCNMENFDPVGIHTGDSIVFAPAQTMSDYENQMLRDASLSIIRALKIEGGCNVQLALDPNSFKYYVIEVNPRVSRSSALASKATGYPIAKLAAKIAVGLTLDEVINPVTGSTYAMFEPALDYVVAKIPRFPFDKFEKGERRLGTQMKATGEVMAIGRNIEESLLKACRSLEIGVHHNEIPELAAVSDDALIEKVVKAQDDRLFYVSEAIRRGYTPEEIAELTKIDIFYLDKLLHIFEIEQELGAHPQDLEVLKTAKLNGFSDRKIAELWGTTDDKVRQLRLENKIVPVYKMVDTCAAEFDSETPYFYSTYGWENESIRSDKESVLVLGSGPIRIGQGVEFDYATVHSVKAIQAAGYEAIIMNSNPETVSTDFSVSDKLYFEPLTFEDVMNVIDLEQPKGVIVQFGGQTAINLAEPLAKAGVTILGTQVADLDRAEDRDLFEQALKELDIPQPPGQTATNEEEAALAARKIGFPVLVRPSYVLGGRAMEIVENEEDLRSYMRTAVKASPDHPVLVDSYIVGQECEVDAISDGKNVLIPGIMEHIERAGVHSGDSMAVYPPQTLSQKVQETIADYTKRLAIGLHCLGMMNIQFVIKDEKVYVIEVNPRASRTVPFLSKVTNIPMAQVATKLILGQSLSELGYQNGLYPESTRVHIKAPVFSFTKLAKVDSLLGPEMKSTGEVMGSDATLEKALYKAFEASYLHLPTFGNVVFTIADDAKEEALNLARRFQNIGYGILATEGTAAFFASHGLQAQPVGKIGDDDKDIPSFVRKGRIQAIINTVGTKRTADEDGEQIRRSAIEHGVPLFTALDTANAMLKVLESRSFVTEAI.

Residues M1–E401 are carboxyphosphate synthetic domain. ATP-binding residues include R129, R169, G175, G176, R208, I210, E215, G241, I242, H243, Q284, and E298. The 195-residue stretch at K133–V327 folds into the ATP-grasp 1 domain. Positions 284, 298, and 300 each coordinate Mg(2+). Positions 284, 298, and 300 each coordinate Mn(2+). The tract at residues I402–S546 is oligomerization domain. The carbamoyl phosphate synthetic domain stretch occupies residues I547–Y929. An ATP-grasp 2 domain is found at E671–L861. Residues R707, S746, I748, E752, G777, V778, H779, S780, Q820, and E832 each contribute to the ATP site. Residues Q820, E832, and N834 each coordinate Mg(2+). 3 residues coordinate Mn(2+): Q820, E832, and N834. The region spanning L930–I1058 is the MGS-like domain. The interval L930 to I1058 is allosteric domain.

This sequence belongs to the CarB family. Composed of two chains; the small (or glutamine) chain promotes the hydrolysis of glutamine to ammonia, which is used by the large (or ammonia) chain to synthesize carbamoyl phosphate. Tetramer of heterodimers (alpha,beta)4. Mg(2+) is required as a cofactor. The cofactor is Mn(2+).

The enzyme catalyses hydrogencarbonate + L-glutamine + 2 ATP + H2O = carbamoyl phosphate + L-glutamate + 2 ADP + phosphate + 2 H(+). It carries out the reaction hydrogencarbonate + NH4(+) + 2 ATP = carbamoyl phosphate + 2 ADP + phosphate + 2 H(+). It functions in the pathway amino-acid biosynthesis; L-arginine biosynthesis; carbamoyl phosphate from bicarbonate: step 1/1. Its pathway is pyrimidine metabolism; UMP biosynthesis via de novo pathway; (S)-dihydroorotate from bicarbonate: step 1/3. Large subunit of the glutamine-dependent carbamoyl phosphate synthetase (CPSase). CPSase catalyzes the formation of carbamoyl phosphate from the ammonia moiety of glutamine, carbonate, and phosphate donated by ATP, constituting the first step of 2 biosynthetic pathways, one leading to arginine and/or urea and the other to pyrimidine nucleotides. The large subunit (synthetase) binds the substrates ammonia (free or transferred from glutamine from the small subunit), hydrogencarbonate and ATP and carries out an ATP-coupled ligase reaction, activating hydrogencarbonate by forming carboxy phosphate which reacts with ammonia to form carbamoyl phosphate. The chain is Carbamoyl phosphate synthase large chain from Streptococcus pneumoniae serotype 2 (strain D39 / NCTC 7466).